We begin with the raw amino-acid sequence, 2924 residues long: Zinc finger ZZ-type and EF-hand domain-containing protein 1 (2924 aa).

A disordered region spans residues 1–41; it reads MGNAPSNSSEDEAAAAGGEGWSPHQDWAADSGTTPGPGPAA. G2 carries the N-myristoyl glycine lipid modification. Low complexity predominate over residues 28–41; that stretch reads AADSGTTPGPGPAA. Residues 111–146 enclose the EF-hand domain; sequence CSGEQFEEAFAQFDAEGDGTVDAENMLEALKNSSGA. The DOC domain maps to 226–405; that stretch reads LVQKEKESPG…AIWYWSLLTS (180 aa). S240 is modified (phosphoserine). Residues 1452-1470 are compositionally biased toward basic and acidic residues; it reads HLQPLDRRQRTSSVVEEHF. The disordered stretch occupies residues 1452–1527; sequence HLQPLDRRQR…STPTRRPPFT (76 aa). Residues 1472-1485 show a composition bias toward low complexity; the sequence is GSASPTEAATPAAG. Phosphoserine is present on residues S1475, S1488, and S1509. T1510 carries the post-translational modification Phosphothreonine. Residues 1514–1523 show a composition bias toward pro residues; sequence PSPPSTPTRR. S1515 is subject to Phosphoserine. Phosphothreonine is present on residues T1519 and T1521. A phosphoserine mark is found at S1535 and S1538. ZZ-type zinc fingers lie at residues 1776 to 1831 and 1825 to 1880; these read NVDI…FTCD and NMEF…MVTI. 16 residues coordinate Zn(2+): C1781, C1784, C1795, C1798, C1804, C1807, H1817, H1821, C1830, C1833, C1844, C1847, C1853, C1856, H1866, and H1870. The disordered stretch occupies residues 2388–2418; it reads DLELDERGDQEEELDRPVSSPGEAEQKKLDP. Position 2407 is a phosphoserine (S2407). N6-acetyllysine is present on K2630.

In terms of assembly, interacts with KLF6 and KLF9. Interacts via (ZZ-type 2 zinc finger) with histone H3 trimethylated at 'Lys-4' (H3K4me3) and histone H3 acetylated at 'Lys-4' (H3K4ac).

Functionally, histone H3 reader which may act as a transcriptional coactivator for KLF6 and KLF9 transcription factors. This Mus musculus (Mouse) protein is Zinc finger ZZ-type and EF-hand domain-containing protein 1 (Zzef1).